We begin with the raw amino-acid sequence, 811 residues long: U-box domain-containing protein 43 (811 aa).

Residues 24–103 enclose the U-box domain; sequence NIYEAFICPL…EEWRARNDAL (80 aa). 9 ARM repeats span residues 136–175, 178–217, 220–261, 263–302, 303–342, 344–388, 399–438, 444–484, and 489–528; these read RKIRQRVCNPQLVRLITDMLKSSSHEVRCKALQTLQVVVE, EESKAIVAEGDTVRTIVKFLSQEPSKGREAAVSVLFELSK, ALCE…NLER, EENVRQMAINGRLQPLLAKLLEGSPETKVSMAFYLGVLAL, NNDVKVIVAQTVGSSLIDLMRTRDMSQREAALGALNNISS, EGSA…NIVN, GPHHQTLVSEEIVENLLQLTSNTGPEIQGKLLAVLVGLTS, INVV…NISP, and ELANALRSTVGQLGSLVSIISENTPTITEEQAAAAGLLAE.

The enzyme catalyses S-ubiquitinyl-[E2 ubiquitin-conjugating enzyme]-L-cysteine + [acceptor protein]-L-lysine = [E2 ubiquitin-conjugating enzyme]-L-cysteine + N(6)-ubiquitinyl-[acceptor protein]-L-lysine.. It functions in the pathway protein modification; protein ubiquitination. Functionally, functions as an E3 ubiquitin ligase. The sequence is that of U-box domain-containing protein 43 (PUB43) from Arabidopsis thaliana (Mouse-ear cress).